The chain runs to 364 residues: Dual-specificity RNA methyltransferase RlmN (364 aa).

E91 (proton acceptor) is an active-site residue. A Radical SAM core domain is found at 97–333; it reads ESDRGTLCIS…VTVRKTRGDD (237 aa). A disulfide bridge connects residues C104 and C338. [4Fe-4S] cluster-binding residues include C111, C115, and C118. Residues 164 to 165, S196, 218 to 220, and N295 each bind S-adenosyl-L-methionine; these read GE and SLH. C338 (S-methylcysteine intermediate) is an active-site residue.

The protein belongs to the radical SAM superfamily. RlmN family. [4Fe-4S] cluster is required as a cofactor.

The protein resides in the cytoplasm. It catalyses the reaction adenosine(2503) in 23S rRNA + 2 reduced [2Fe-2S]-[ferredoxin] + 2 S-adenosyl-L-methionine = 2-methyladenosine(2503) in 23S rRNA + 5'-deoxyadenosine + L-methionine + 2 oxidized [2Fe-2S]-[ferredoxin] + S-adenosyl-L-homocysteine. It carries out the reaction adenosine(37) in tRNA + 2 reduced [2Fe-2S]-[ferredoxin] + 2 S-adenosyl-L-methionine = 2-methyladenosine(37) in tRNA + 5'-deoxyadenosine + L-methionine + 2 oxidized [2Fe-2S]-[ferredoxin] + S-adenosyl-L-homocysteine. Functionally, specifically methylates position 2 of adenine 2503 in 23S rRNA and position 2 of adenine 37 in tRNAs. m2A2503 modification seems to play a crucial role in the proofreading step occurring at the peptidyl transferase center and thus would serve to optimize ribosomal fidelity. The polypeptide is Dual-specificity RNA methyltransferase RlmN (Neisseria meningitidis serogroup C / serotype 2a (strain ATCC 700532 / DSM 15464 / FAM18)).